The sequence spans 1050 residues: Self-sufficient cytochrome P450 monooxygenase CYP505E5 (1050 aa).

Cysteine 405 serves as a coordination point for heme. A disordered region spans residues 467-491 (RRSMLVARDGSSGESSNHLAEARGD). The region spanning 500 to 641 (VSFFYGSNSG…DLEAWEETSL (142 aa)) is the Flavodoxin-like domain. Residues 506 to 510 (SNSGT) and 585 to 617 (VFGCGHHDWTQTFYRIPILIDDLMHKAGATRLA) contribute to the FMN site. The 229-residue stretch at 679-907 (KGLIEAKVTA…RPAKESFHLP (229 aa)) folds into the FAD-binding FR-type domain.

The protein in the N-terminal section; belongs to the cytochrome P450 family. FAD is required as a cofactor. It depends on FMN as a cofactor. Heme serves as cofactor.

It catalyses the reaction 2 oxidized [cytochrome P450] + NADPH = 2 reduced [cytochrome P450] + NADP(+) + H(+). It carries out the reaction an organic molecule + reduced [NADPH--hemoprotein reductase] + O2 = an alcohol + oxidized [NADPH--hemoprotein reductase] + H2O + H(+). The enzyme catalyses dodecanoate + reduced [NADPH--hemoprotein reductase] + O2 = 5-hydroxydodecanoate + oxidized [NADPH--hemoprotein reductase] + H2O + H(+). The catalysed reaction is tetradecanoate + reduced [NADPH--hemoprotein reductase] + O2 = 7-hydroxytetradecanoate + oxidized [NADPH--hemoprotein reductase] + H2O + H(+). It catalyses the reaction dodecan-1-ol + reduced [NADPH--hemoprotein reductase] + O2 = 1,5-dodecanediol + oxidized [NADPH--hemoprotein reductase] + H2O + H(+). It carries out the reaction dodecan-1-ol + reduced [NADPH--hemoprotein reductase] + O2 = 1,4-dodecanediol + oxidized [NADPH--hemoprotein reductase] + H2O + H(+). The enzyme catalyses dodecan-1-ol + reduced [NADPH--hemoprotein reductase] + O2 = 1,6-dodecanediol + oxidized [NADPH--hemoprotein reductase] + H2O + H(+). In terms of biological role, self-sufficient cytochrome P450 monooxygenase that catalyzes the regioselective in-chain hydroxylation of alkanes, fatty alcohols, and fatty acids at the omega-7 position. Performs hydroxylation of C10-C16 n-alkanes and C12 and C14 fatty alcohols; and thereby enables the one step biocatalytic synthesis of rare alcohols such as 5-dodecanol and 7-tetradecanol. Converts 1-dodecanol into 1,5-dodecanediol as major product with very little sub-terminally hydroxylated products with the 1,4-dodecanediol and 1,6-dodecanediol more abundant. Converts dodecanoic acid to 5-hydroxydodecanoic acid which can be further converted into delta-dodecalactone by lactonization of the 5-hydroxy acid at low pH. Also gives sub-terminal hydroxylation of dodecanoic acid with 9-hydroxydodecanoic acid being the second most abundant product. This is Self-sufficient cytochrome P450 monooxygenase CYP505E5 from Aspergillus niger.